A 337-amino-acid chain; its full sequence is S-adenosylmethionine:tRNA ribosyltransferase-isomerase (337 aa).

Belongs to the QueA family. Monomer.

Its subcellular location is the cytoplasm. The enzyme catalyses 7-aminomethyl-7-carbaguanosine(34) in tRNA + S-adenosyl-L-methionine = epoxyqueuosine(34) in tRNA + adenine + L-methionine + 2 H(+). It functions in the pathway tRNA modification; tRNA-queuosine biosynthesis. In terms of biological role, transfers and isomerizes the ribose moiety from AdoMet to the 7-aminomethyl group of 7-deazaguanine (preQ1-tRNA) to give epoxyqueuosine (oQ-tRNA). This Legionella pneumophila (strain Paris) protein is S-adenosylmethionine:tRNA ribosyltransferase-isomerase.